The following is a 184-amino-acid chain: ATP synthase subunit b, chloroplastic (184 aa).

Residues 27–49 (LATNPINLSVVLGVLIFFGKGVL) traverse the membrane as a helical segment.

This sequence belongs to the ATPase B chain family. As to quaternary structure, F-type ATPases have 2 components, F(1) - the catalytic core - and F(0) - the membrane proton channel. F(1) has five subunits: alpha(3), beta(3), gamma(1), delta(1), epsilon(1). F(0) has four main subunits: a(1), b(1), b'(1) and c(10-14). The alpha and beta chains form an alternating ring which encloses part of the gamma chain. F(1) is attached to F(0) by a central stalk formed by the gamma and epsilon chains, while a peripheral stalk is formed by the delta, b and b' chains.

Its subcellular location is the plastid. It is found in the chloroplast thylakoid membrane. F(1)F(0) ATP synthase produces ATP from ADP in the presence of a proton or sodium gradient. F-type ATPases consist of two structural domains, F(1) containing the extramembraneous catalytic core and F(0) containing the membrane proton channel, linked together by a central stalk and a peripheral stalk. During catalysis, ATP synthesis in the catalytic domain of F(1) is coupled via a rotary mechanism of the central stalk subunits to proton translocation. Functionally, component of the F(0) channel, it forms part of the peripheral stalk, linking F(1) to F(0). In Buxus microphylla (Littleleaf boxwood), this protein is ATP synthase subunit b, chloroplastic.